Reading from the N-terminus, the 312-residue chain is Small ribosomal subunit protein uS2 (312 aa).

The interval 232 to 312 (RASGAAERDE…AAPEGEAAAE (81 aa)) is disordered. Residues 245 to 284 (REGRDDRGDRRDDRRGPRRGDRRDDRRDRGGDRGGDRRGP) show a composition bias toward basic and acidic residues. Residues 291–312 (AAPVASAEPAAEAAPEGEAAAE) are compositionally biased toward low complexity.

The protein belongs to the universal ribosomal protein uS2 family.

In Myxococcus xanthus (strain DK1622), this protein is Small ribosomal subunit protein uS2.